Consider the following 562-residue polypeptide: Alpha-amylase 2 (562 aa).

N236 contacts Ca(2+). The active-site Nucleophile is the D309. E338 serves as the catalytic Proton donor.

The protein belongs to the glycosyl hydrolase 13 family. Monomer. The cofactor is Ca(2+).

Its subcellular location is the cytoplasm. The catalysed reaction is Endohydrolysis of (1-&gt;4)-alpha-D-glucosidic linkages in polysaccharides containing three or more (1-&gt;4)-alpha-linked D-glucose units.. This is Alpha-amylase 2 (amyB) from Dictyoglomus thermophilum (strain ATCC 35947 / DSM 3960 / H-6-12).